We begin with the raw amino-acid sequence, 192 residues long: Ribosome maturation factor RimM (192 aa).

Residues 97–172 (EDEYYLADLI…VVLADPPALV (76 aa)) enclose the PRC barrel domain. A disordered region spans residues 168-192 (PPALVGEPEGPESPAEDDDGERHYD).

This sequence belongs to the RimM family. In terms of assembly, binds ribosomal protein uS19.

It is found in the cytoplasm. In terms of biological role, an accessory protein needed during the final step in the assembly of 30S ribosomal subunit, possibly for assembly of the head region. Essential for efficient processing of 16S rRNA. May be needed both before and after RbfA during the maturation of 16S rRNA. It has affinity for free ribosomal 30S subunits but not for 70S ribosomes. The polypeptide is Ribosome maturation factor RimM (Caulobacter sp. (strain K31)).